Here is a 208-residue protein sequence, read N- to C-terminus: Methyl-CpG-binding domain protein 3-like 4 (208 aa).

Belongs to the MBD3L family.

The chain is Methyl-CpG-binding domain protein 3-like 4 (MBD3L4) from Homo sapiens (Human).